Here is a 586-residue protein sequence, read N- to C-terminus: Arrestin-related trafficking adapter 5 (586 aa).

Disordered stretches follow at residues 123-145 (GENAENQHNSSSGRSTSNQDMDT) and 182-217 (ENGVTGTPFEGLRENARSRSSSSNTLNNNSHSYSNR). Over residues 126–145 (AENQHNSSSGRSTSNQDMDT) the composition is skewed to polar residues. Low complexity predominate over residues 199–216 (SRSSSSNTLNNNSHSYSN). Lysine 364 participates in a covalent cross-link: Glycyl lysine isopeptide (Lys-Gly) (interchain with G-Cter in ubiquitin).

The protein belongs to the arrestin family. Interacts with RSP5. In terms of processing, ubiquitinated by RSP5.

Functionally, may regulate endocytosis by recruiting RSP5 ubiquitin ligase activity to specific plasma membrane proteins in response to extracellular stimuli. The sequence is that of Arrestin-related trafficking adapter 5 (ART5) from Saccharomyces cerevisiae (strain ATCC 204508 / S288c) (Baker's yeast).